We begin with the raw amino-acid sequence, 170 residues long: Guided entry of tail-anchored proteins factor 1 (170 aa).

Over 1–6 (MAAGFN) the chain is Lumenal. A helical membrane pass occupies residues 7–27 (WFLVLSSVFLCNLVKTFLPSI). Residues 28–96 (SSFLSKIFHK…KSRTAQQAKM (69 aa)) lie on the Cytoplasmic side of the membrane. The interaction with GET3/TRC40 stretch occupies residues 35–93 (FHKDADQEMEMRTEIQNMKMELSTISMMDEFARYARLERKINKMTDQLKTLVKSRTAQQ). Positions 61 to 91 (MMDEFARYARLERKINKMTDQLKTLVKSRTA) form a coiled coil. The helical transmembrane segment at 97–117 (KWIVNIAFYILQAALMISLIL) threads the bilayer. Residues 118-137 (KYYADPVTVVPSKWIAPLER) lie on the Lumenal side of the membrane. A helical transmembrane segment spans residues 138–158 (LVAFPSGVAGGVGITCWLVVC). At 159-170 (NKVVALILQAVS) the chain is on the cytoplasmic side.

It belongs to the WRB/GET1 family. In terms of assembly, component of the Golgi to ER traffic (GET) complex, which is composed of GET1/WRB, CAMLG/GET2 and GET3/TRC40. Within the complex, GET1 and CAMLG form a heterotetramer which is stabilized by phosphatidylinositol binding and which binds to the GET3 homodimer.

The protein resides in the endoplasmic reticulum membrane. Functionally, required for the post-translational delivery of tail-anchored (TA) proteins to the endoplasmic reticulum (ER). Together with CAMLG/GET2, acts as a membrane receptor for soluble GET3/TRC40, which recognizes and selectively binds the transmembrane domain of TA proteins in the cytosol. Required to ensure correct topology and ER insertion of CAMLG. The chain is Guided entry of tail-anchored proteins factor 1 from Danio rerio (Zebrafish).